We begin with the raw amino-acid sequence, 410 residues long: Lissencephaly-1 homolog (410 aa).

One can recognise a LisH domain in the interval 7-39 (QRDELNRAIADYLRSNGYEEAYSTFKKEAELDN). A coiled-coil region spans residues 32-82 (KKEAELDNNEELDKKYAGLLEKKWTSVIRLQKKVMELESKLNEAKEEITLG). WD repeat units lie at residues 106 to 147 (GHRS…RTLK), 148 to 189 (GHTD…RTMH), 190 to 229 (GHDH…CVKT), 232 to 271 (GHRE…CKAE), 274 to 333 (EHEH…CLMT), 336 to 375 (GHDN…CMKT), and 378 to 410 (AHEH…WECR).

Belongs to the WD repeat LIS1/nudF family. As to quaternary structure, can self-associate. Component of the cytosolic PAF-AH (I) heterotetrameric enzyme, which is composed of PAFAH1B1 (beta), PAFAH1B2 (alpha2) and PAFAH1B3 (alpha1) subunits. The catalytic activity of the enzyme resides in the alpha1 (PAFAH1B3) and alpha2 (PAFAH1B2) subunits, whereas the beta subunit (PAFAH1B1) has regulatory activity. Trimer formation is not essential for the catalytic activity. Interacts with dynein, dynactin, nde1 and ndel1.

The protein resides in the cytoplasm. Its subcellular location is the cytoskeleton. It localises to the microtubule organizing center. It is found in the centrosome. Regulatory subunit (beta subunit) of the cytosolic type I platelet-activating factor (PAF) acetylhydrolase (PAF-AH (I)), an enzyme that catalyzes the hydrolyze of the acetyl group at the sn-2 position of PAF and its analogs and participates in the PAF inactivation. Positively regulates the activity of the minus-end directed microtubule motor protein dynein. May enhance dynein-mediated microtubule sliding by targeting dynein to the microtubule plus end. Required for several dynein- and microtubule-dependent processes such as the maintenance of Golgi integrity, the peripheral transport of microtubule fragments and the coupling of the nucleus and centrosome. May be required for proliferation of neuronal precursors and neuronal migration. The polypeptide is Lissencephaly-1 homolog (pafah1b1) (Tetraodon nigroviridis (Spotted green pufferfish)).